A 303-amino-acid chain; its full sequence is Diaminopimelate epimerase (303 aa).

Substrate is bound by residues N15 and N72. C81 functions as the Proton donor in the catalytic mechanism. Residues 82–83 (GN), N169, N202, and 220–221 (ER) contribute to the substrate site. C229 (proton acceptor) is an active-site residue. 230-231 (GT) is a substrate binding site.

Belongs to the diaminopimelate epimerase family. As to quaternary structure, homodimer.

It localises to the cytoplasm. It carries out the reaction (2S,6S)-2,6-diaminopimelate = meso-2,6-diaminopimelate. The protein operates within amino-acid biosynthesis; L-lysine biosynthesis via DAP pathway; DL-2,6-diaminopimelate from LL-2,6-diaminopimelate: step 1/1. In terms of biological role, catalyzes the stereoinversion of LL-2,6-diaminopimelate (L,L-DAP) to meso-diaminopimelate (meso-DAP), a precursor of L-lysine and an essential component of the bacterial peptidoglycan. The polypeptide is Diaminopimelate epimerase (Prochlorococcus marinus (strain MIT 9313)).